Consider the following 111-residue polypeptide: Rhodanese domain-containing protein CG4456 (111 aa).

The region spanning 12 to 110 (NHPDVYLIDV…SWNEWAQKEG (99 aa)) is the Rhodanese domain.

This chain is Rhodanese domain-containing protein CG4456, found in Drosophila melanogaster (Fruit fly).